Consider the following 257-residue polypeptide: Probable amino-acid ABC transporter ATP-binding protein y4tH (257 aa).

Positions 6-251 (IVFDKVKKAY…PKEERTREFL (246 aa)) constitute an ABC transporter domain. 38–45 (GPSGSGKS) contributes to the ATP binding site.

This sequence belongs to the ABC transporter superfamily.

It localises to the cell inner membrane. Probably part of a binding-protein-dependent transport system y4tEFGH for an amino acid. Probably responsible for energy coupling to the transport system. This chain is Probable amino-acid ABC transporter ATP-binding protein y4tH, found in Sinorhizobium fredii (strain NBRC 101917 / NGR234).